A 314-amino-acid chain; its full sequence is Homoserine O-acetyltransferase (314 aa).

Cys-142 serves as the catalytic Acyl-thioester intermediate. Positions 163 and 192 each coordinate substrate. His-235 functions as the Proton acceptor in the catalytic mechanism. Glu-237 is an active-site residue. Residue Arg-249 participates in substrate binding.

Belongs to the MetA family.

The protein resides in the cytoplasm. It carries out the reaction L-homoserine + acetyl-CoA = O-acetyl-L-homoserine + CoA. It participates in amino-acid biosynthesis; L-methionine biosynthesis via de novo pathway; O-acetyl-L-homoserine from L-homoserine: step 1/1. Functionally, transfers an acetyl group from acetyl-CoA to L-homoserine, forming acetyl-L-homoserine. This is Homoserine O-acetyltransferase from Streptococcus mutans serotype c (strain ATCC 700610 / UA159).